Reading from the N-terminus, the 141-residue chain is Transcription antitermination protein NusB (141 aa).

This sequence belongs to the NusB family.

In terms of biological role, involved in transcription antitermination. Required for transcription of ribosomal RNA (rRNA) genes. Binds specifically to the boxA antiterminator sequence of the ribosomal RNA (rrn) operons. This chain is Transcription antitermination protein NusB, found in Clostridium botulinum (strain Loch Maree / Type A3).